The chain runs to 142 residues: Large ribosomal subunit protein uL11 (142 aa).

It belongs to the universal ribosomal protein uL11 family. Part of the ribosomal stalk of the 50S ribosomal subunit. Interacts with L10 and the large rRNA to form the base of the stalk. L10 forms an elongated spine to which L12 dimers bind in a sequential fashion forming a multimeric L10(L12)X complex. In terms of processing, one or more lysine residues are methylated.

Its function is as follows. Forms part of the ribosomal stalk which helps the ribosome interact with GTP-bound translation factors. The polypeptide is Large ribosomal subunit protein uL11 (Nitrobacter winogradskyi (strain ATCC 25391 / DSM 10237 / CIP 104748 / NCIMB 11846 / Nb-255)).